The chain runs to 509 residues: ATP synthase subunit beta, mitochondrial (509 aa).

The N-terminal 32 residues, 1 to 32 (MVLPRLIPRLSRSAFKVAQANNRVFNAPFRGM), are a transit peptide targeting the mitochondrion. 189 to 196 (GAGVGKTV) is a binding site for ATP.

F-type ATP synthases have 2 components, the catalytic core F(1) and the membrane-embedded component F(0), linked together by a central stalk and a peripheral stalk. The central stalk, also called rotor shaft, is often seen as part of F(1). The peripheral stalk is seen as part of F(0). F(0) contains the membrane channel next to the rotor. F-type ATP synthases form dimers but each monomer functions independently in ATP generation. The dimer consists of 17 different polypeptides: ATP1 (subunit alpha, 3 molecules per monomer, part of F(1)), ATP2 (subunit beta, 3 copies per monomer, part of F(1)), ATP3 (subunit gamma, part of the central stalk), ATP4 (subunit b, part of the peripheral stalk), ATP5/OSCP (subunit 5/OSCP, part of the peripheral stalk), ATP6 (subunit a, part of the peripheral stalk), ATP7 (subunit d, part of the peripheral stalk), ATP8 (subunit 8, part of the peripheral stalk), OLI1 (subunit c, part of the rotor, 10 molecules per monomer), ATP14 (subunit h, part of the peripheral stalk), ATP15 (subunit epsilon, part of the central stalk), ATP16 (subunit delta, part of the central stalk), ATP17 (subunit f, part of the peripheral stalk), ATP18 (subunit i/j, part of the peripheral stalk), ATP19 (subunit k, dimer-specific, at interface between monomers), ATP20 (subunit g, at interface between monomers), TIM11 (subunit e, at interface between monomers).

It localises to the mitochondrion inner membrane. It carries out the reaction ATP + H2O + 4 H(+)(in) = ADP + phosphate + 5 H(+)(out). Mitochondrial membrane ATP synthase (F(1)F(0) ATP synthase or Complex V) produces ATP from ADP in the presence of a proton gradient across the membrane which is generated by electron transport complexes of the respiratory chain. F-type ATP synthases consist of two structural domains, F(1) - containing the extramembraneous catalytic core, and F(0) - containing the membrane proton channel, linked together by a central stalk and a peripheral stalk. During catalysis, ATP synthesis in the catalytic domain of F(1) is coupled via a rotary mechanism of the central stalk subunits to proton translocation. Subunits alpha/ATP1 and beta/ATP2 form the catalytic core in F(1). Rotation of the central stalk against the surrounding alpha/ATP1(3)beta/ATP2(3) subunits leads to hydrolysis of ATP in three separate catalytic sites on the beta/ATP2 subunits. This chain is ATP synthase subunit beta, mitochondrial, found in Yarrowia lipolytica (strain CLIB 122 / E 150) (Yeast).